Reading from the N-terminus, the 323-residue chain is ADP-L-glycero-D-manno-heptose-6-epimerase (323 aa).

NADP(+) contacts are provided by residues 10 to 11 (FI), 31 to 32 (DN), lysine 38, lysine 53, 75 to 79 (EGACS), and asparagine 92. Catalysis depends on tyrosine 139, which acts as the Proton acceptor. An NADP(+)-binding site is contributed by lysine 143. Substrate is bound at residue asparagine 168. NADP(+) is bound by residues valine 169 and lysine 177. The Proton acceptor role is filled by lysine 177. Substrate is bound by residues aspartate 179, lysine 186, 200 to 203 (FGAY), arginine 213, and tyrosine 277.

This sequence belongs to the NAD(P)-dependent epimerase/dehydratase family. HldD subfamily. Homopentamer. The cofactor is NADP(+).

The catalysed reaction is ADP-D-glycero-beta-D-manno-heptose = ADP-L-glycero-beta-D-manno-heptose. Its pathway is nucleotide-sugar biosynthesis; ADP-L-glycero-beta-D-manno-heptose biosynthesis; ADP-L-glycero-beta-D-manno-heptose from D-glycero-beta-D-manno-heptose 7-phosphate: step 4/4. Its function is as follows. Catalyzes the interconversion between ADP-D-glycero-beta-D-manno-heptose and ADP-L-glycero-beta-D-manno-heptose via an epimerization at carbon 6 of the heptose. This chain is ADP-L-glycero-D-manno-heptose-6-epimerase, found in Hydrogenovibrio crunogenus (strain DSM 25203 / XCL-2) (Thiomicrospira crunogena).